The primary structure comprises 366 residues: Septin-1 (366 aa).

Residues 22–295 form the Septin-type G domain; that stretch reads KGFDFTLMVA…EGYRARCLQS (274 aa). The G1 motif stretch occupies residues 32 to 39; that stretch reads GESGLGKS. GTP-binding positions include 32-39, Thr66, Gly92, and 171-179; these read GESGLGKS and KADALMPRE. Residues 89–92 are G3 motif; it reads DTPG. The interval 170–173 is G4 motif; the sequence is GKAD. At Ser206 the chain carries Phosphoserine. Residues Gly229 and Arg244 each contribute to the GTP site. Phosphoserine is present on Ser247. Thr250 is subject to Phosphothreonine. 2 positions are modified to phosphoserine; by AURKB: Ser306 and Ser314. A disordered region spans residues 347–366; sequence EKMQAQMQQSQAQGEQSDVL. The span at 349–366 shows a compositional bias: low complexity; that stretch reads MQAQMQQSQAQGEQSDVL.

The protein belongs to the TRAFAC class TrmE-Era-EngA-EngB-Septin-like GTPase superfamily. Septin GTPase family. As to quaternary structure, septins polymerize into heterooligomeric protein complexes that form filaments, and can associate with cellular membranes, actin filaments and microtubules. GTPase activity is required for filament formation. Interacts with AURKB.

The protein localises to the cytoplasm. It localises to the cytoskeleton. The protein resides in the microtubule organizing center. It is found in the centrosome. Its subcellular location is the midbody. Functionally, filament-forming cytoskeletal GTPase. May play a role in cytokinesis (Potential). This is Septin-1 from Mus musculus (Mouse).